Here is a 497-residue protein sequence, read N- to C-terminus: Probable malate:quinone oxidoreductase (497 aa).

The protein belongs to the MQO family. Requires FAD as cofactor.

It carries out the reaction (S)-malate + a quinone = a quinol + oxaloacetate. It functions in the pathway carbohydrate metabolism; tricarboxylic acid cycle; oxaloacetate from (S)-malate (quinone route): step 1/1. The protein is Probable malate:quinone oxidoreductase of Prochlorococcus marinus subsp. pastoris (strain CCMP1986 / NIES-2087 / MED4).